A 504-amino-acid chain; its full sequence is Sodium-coupled neutral amino acid symporter 2 (504 aa).

Residues 1 to 22 are disordered; sequence MKKTEMGRFNISPDEDSSSYSS. The Cytoplasmic segment spans residues 1-76; the sequence is MKKTEMGRFN…HPGTTSFGMS (76 aa). A regulates protein turnover upon amino acid deprivation region spans residues 1–96; the sequence is MKKTEMGRFN…SGILGLSYAM (96 aa). A phosphoserine mark is found at Ser-12, Ser-21, Ser-22, and Ser-55. Residues 77-96 form a helical membrane-spanning segment; that stretch reads VFNLSNAIVGSGILGLSYAM. Asn-82 serves as a coordination point for Na(+). Residues 97-102 are Extracellular-facing; it reads ANTGIA. A helical membrane pass occupies residues 103–123; that stretch reads LFIILLTFVSIFSLYSVHLLL. At 124–158 the chain is on the cytoplasmic side; the sequence is KTANEGGSLLYEQLGHKAYGLAGKLAASGSITMQN. Residues 159–177 form a helical membrane-spanning segment; it reads IGAMSSYLFIVKYELPLVI. Topologically, residues 178-188 are extracellular; that stretch reads KALMNIEDTNG. The chain crosses the membrane as a helical span at residues 189–209; sequence LWYLNGDYLVLLVSFVLILPL. Residues 210-217 lie on the Cytoplasmic side of the membrane; it reads SLLRNLGY. Residues 218–238 traverse the membrane as a helical segment; it reads LGYTSGLSLLCMIFFLIVVIC. The Extracellular segment spans residues 239–290; the sequence is KKFQIPCPVEVALMANETVNGTFTQVALAALASNSTAADTCRPRYFIFNSQT. The cysteines at positions 245 and 279 are disulfide-linked. N-linked (GlcNAc...) asparagine glycosylation is found at Asn-254, Asn-258, and Asn-272. Residues 291-311 form a helical membrane-spanning segment; the sequence is VYAVPILTFSFVCHPAVLPIY. The Cytoplasmic portion of the chain corresponds to 312–327; the sequence is EELKSRSRRRMMNVSK. A helical membrane pass occupies residues 328 to 348; the sequence is ISFFAMFLMYLLAALFGYLTF. Over 349-369 the chain is Extracellular; the sequence is YEHVESELLHTYSAIVGTDIL. Residues 370–390 traverse the membrane as a helical segment; that stretch reads LLVVRLAVLVAVTLTVPVVIF. Thr-384 contributes to the Na(+) binding site. Topologically, residues 391 to 411 are cytoplasmic; that stretch reads PIRSSVTHLLCPTKEFSWFRH. Residues 412 to 432 form a helical membrane-spanning segment; sequence SVITVTILAFTNLLVIFVPTI. Residues 433-434 lie on the Extracellular side of the membrane; that stretch reads RD. Residues 435–455 traverse the membrane as a helical segment; sequence IFGFIGASAAAMLIFILPSAF. Residues 456-470 are Cytoplasmic-facing; the sequence is YIKLVKKEPMRSVQK. Residues 471–493 traverse the membrane as a helical segment; it reads IGALCFLLSGVVVMIGSMGLIVL. Residues 494 to 504 are Extracellular-facing; it reads DWVHDASAGGH.

The protein belongs to the amino acid/polyamine transporter 2 family. In terms of processing, polyubiquitination by NEDD4L regulates the degradation and the activity of SLC38A2. Widely expressed. Expressed in skeletal muscle and adipose tissue (at protein level). Expressed by glutamatergic and GABAergic neurons together with astrocytes and other non-neuronal cells in the cerebral cortex (at protein level). Widely expressed in the central nervous systeme where, it is enriched in the spinal cord and the brainstem nuclei, especially those of the auditory system.

The protein localises to the cell membrane. The enzyme catalyses L-alanine(in) + Na(+)(in) = L-alanine(out) + Na(+)(out). It catalyses the reaction glycine(in) + Na(+)(in) = glycine(out) + Na(+)(out). It carries out the reaction L-serine(in) + Na(+)(in) = L-serine(out) + Na(+)(out). The catalysed reaction is L-proline(in) + Na(+)(in) = L-proline(out) + Na(+)(out). The enzyme catalyses L-methionine(in) + Na(+)(in) = L-methionine(out) + Na(+)(out). It catalyses the reaction L-histidine(in) + Na(+)(in) = L-histidine(out) + Na(+)(out). It carries out the reaction L-asparagine(in) + Na(+)(in) = L-asparagine(out) + Na(+)(out). The catalysed reaction is L-glutamine(in) + Na(+)(in) = L-glutamine(out) + Na(+)(out). The enzyme catalyses L-threonine(in) + Na(+)(in) = L-threonine(out) + Na(+)(out). It catalyses the reaction L-leucine(in) + Na(+)(in) = L-leucine(out) + Na(+)(out). It carries out the reaction L-phenylalanine(in) + Na(+)(in) = L-phenylalanine(out) + Na(+)(out). With respect to regulation, inhibited by N-methyl-D-glucamine. Inhibited by choline. Allosteric regulation of sodium ions binding by pH. Its function is as follows. Symporter that cotransports neutral amino acids and sodium ions from the extracellular to the intracellular side of the cell membrane. The transport is pH-sensitive, Li(+)-intolerant, electrogenic, driven by the Na(+) electrochemical gradient and cotransports of neutral amino acids and sodium ions with a stoichiometry of 1:1. May function in the transport of amino acids at the blood-brain barrier. May function in the transport of amino acids in the supply of maternal nutrients to the fetus through the placenta. Maintains a key metabolic glutamine/glutamate balance underpinning retrograde signaling by dendritic release of the neurotransmitter glutamate. Transports L-proline in differentiating osteoblasts for the efficient synthesis of proline-enriched proteins and provides proline essential for osteoblast differentiation and bone formation during bone development. This is Sodium-coupled neutral amino acid symporter 2 from Rattus norvegicus (Rat).